We begin with the raw amino-acid sequence, 504 residues long: Fumitremorgin C monooxygenase (504 aa).

The chain crosses the membrane as a helical span at residues L12–G32. Position 442 (C442) interacts with heme.

Belongs to the cytochrome P450 family. The cofactor is heme.

The protein localises to the membrane. It catalyses the reaction fumitremorgin C + 2 reduced [NADPH--hemoprotein reductase] + 2 O2 = 12alpha,13alpha-dihydroxyfumitremorgin C + 2 oxidized [NADPH--hemoprotein reductase] + 2 H2O + 2 H(+). It participates in mycotoxin biosynthesis. Its function is as follows. Cytochrome P450 monooxygenase; part of the gene cluster that mediates the biosynthesis of fumitremorgins, indole alkaloids that carry not only intriguing chemical structures, but also interesting biological and pharmacological activities. The biosynthesis of fumitremorgin-type alkaloids begins by condensation of the two amino acids L-tryptophan and L-proline to brevianamide F, catalyzed by the non-ribosomal peptide synthetase ftmA. Brevianamide F is then prenylated by the prenyltransferase ftmPT1/ftmB in the presence of dimethylallyl diphosphate, resulting in the formation of tryprostatin B. The three cytochrome P450 monooxygenases, ftmP450-1/ftmC, ftmP450-2/ftmE and ftmP450-3/FtmG, are responsible for the conversion of tryprostatin B to 6-hydroxytryprostatin B, tryprostatin A to fumitremorgin C and fumitremorgin C to 12,13-dihydroxyfumitremorgin C, respectively. The putative methyltransferase ftmMT/ftmD is expected for the conversion of 6-hydroxytryprostatin B to tryprostatin A. FtmPT2/FtmH catalyzes the prenylation of 12,13-dihydroxyfumitre-morgin C in the presence of dimethylallyl diphosphate, resulting in the formation of fumitremorgin B. Fumitremorgin B is further converted to verruculogen by ftmOx1/ftmF via the insertion of an endoperoxide bond between the two prenyl moieties. In some fungal species, verruculogen is further converted to fumitremorgin A, but the enzymes involved in this step have not been identified yet. This chain is Fumitremorgin C monooxygenase, found in Aspergillus fumigatus (Neosartorya fumigata).